The sequence spans 147 residues: Small ribosomal subunit protein uS5 (147 aa).

The region spanning 9–72 (FEEVIVDIGR…DDAFKNIVEV (64 aa)) is the S5 DRBM domain.

It belongs to the universal ribosomal protein uS5 family. As to quaternary structure, part of the 30S ribosomal subunit. Contacts proteins S4 and S8.

Its function is as follows. With S4 and S12 plays an important role in translational accuracy. In terms of biological role, located at the back of the 30S subunit body where it stabilizes the conformation of the head with respect to the body. This is Small ribosomal subunit protein uS5 from Campylobacter jejuni subsp. jejuni serotype O:6 (strain 81116 / NCTC 11828).